Reading from the N-terminus, the 103-residue chain is Probable protease inhibitor Egf0.4b (103 aa).

Residues 1–22 (MMSEKFALVLLVACIAFIGIET) form the signal peptide. Residues 35-87 (CGENEAYDSMRRGCEERCDDHNPTFCFKFTTVCWCEKGYVRDKSDTCIKVEDC) form the TIL domain.

It belongs to the polydnaviridae EGF-like motif protein family.

The protein is Probable protease inhibitor Egf0.4b (O11) of Microplitis demolitor bracovirus (isolate Webb) (MdBV).